Here is a 217-residue protein sequence, read N- to C-terminus: Transmembrane protein 247 (217 aa).

The segment covering 1–10 (MATEDREMME) has biased composition (basic and acidic residues). The segment at 1-87 (MATEDREMME…GPATTKGQAG (87 aa)) is disordered. A coiled-coil region spans residues 109–154 (RERDAEMELEKVRMEFELKRLKYLHEENERQRQHEEVMEQLQQQAT). Helical transmembrane passes span 165–185 (LLLP…IHII) and 192–212 (IFFL…LCLI).

It is found in the membrane. This is Transmembrane protein 247 from Bos taurus (Bovine).